Reading from the N-terminus, the 244-residue chain is Ribonuclease HII (244 aa).

The region spanning 23 to 236 (KIILGLDEAG…SKKLLKEFEE (214 aa)) is the RNase H type-2 domain. The a divalent metal cation site is built by aspartate 29, glutamate 30, and aspartate 130.

The protein belongs to the RNase HII family. Mn(2+) serves as cofactor. Requires Mg(2+) as cofactor.

The protein localises to the cytoplasm. The enzyme catalyses Endonucleolytic cleavage to 5'-phosphomonoester.. In terms of biological role, endonuclease that specifically degrades the RNA of RNA-DNA hybrids. The chain is Ribonuclease HII from Methanococcus vannielii (strain ATCC 35089 / DSM 1224 / JCM 13029 / OCM 148 / SB).